Reading from the N-terminus, the 302-residue chain is 4-hydroxy-tetrahydrodipicolinate synthase (302 aa).

Pyruvate is bound at residue Thr-57. The Proton donor/acceptor role is filled by Tyr-145. Residue Lys-173 is the Schiff-base intermediate with substrate of the active site. A pyruvate-binding site is contributed by Ile-213.

Belongs to the DapA family. Homotetramer; dimer of dimers.

The protein localises to the cytoplasm. It carries out the reaction L-aspartate 4-semialdehyde + pyruvate = (2S,4S)-4-hydroxy-2,3,4,5-tetrahydrodipicolinate + H2O + H(+). It participates in amino-acid biosynthesis; L-lysine biosynthesis via DAP pathway; (S)-tetrahydrodipicolinate from L-aspartate: step 3/4. In terms of biological role, catalyzes the condensation of (S)-aspartate-beta-semialdehyde [(S)-ASA] and pyruvate to 4-hydroxy-tetrahydrodipicolinate (HTPA). This Corynebacterium aurimucosum (strain ATCC 700975 / DSM 44827 / CIP 107346 / CN-1) (Corynebacterium nigricans) protein is 4-hydroxy-tetrahydrodipicolinate synthase.